Consider the following 159-residue polypeptide: Small ribosomal subunit protein uS4 (159 aa).

The S4 RNA-binding domain occupies 106-158 (RRLQTIVYRMGLAKSIYHARQLIVHGHIAVAGRRVSSPGFLVPRELEDKISLI).

Belongs to the universal ribosomal protein uS4 family. In terms of assembly, part of the 30S ribosomal subunit. Contacts protein S5. The interaction surface between S4 and S5 is involved in control of translational fidelity.

In terms of biological role, one of the primary rRNA binding proteins, it binds directly to 16S rRNA where it nucleates assembly of the body of the 30S subunit. Its function is as follows. With S5 and S12 plays an important role in translational accuracy. In Pyrobaculum neutrophilum (strain DSM 2338 / JCM 9278 / NBRC 100436 / V24Sta) (Thermoproteus neutrophilus), this protein is Small ribosomal subunit protein uS4.